The sequence spans 89 residues: Small ribosomal subunit protein uS15 (89 aa).

This sequence belongs to the universal ribosomal protein uS15 family. Part of the 30S ribosomal subunit. Forms a bridge to the 50S subunit in the 70S ribosome, contacting the 23S rRNA.

In terms of biological role, one of the primary rRNA binding proteins, it binds directly to 16S rRNA where it helps nucleate assembly of the platform of the 30S subunit by binding and bridging several RNA helices of the 16S rRNA. Forms an intersubunit bridge (bridge B4) with the 23S rRNA of the 50S subunit in the ribosome. In Chlorobium luteolum (strain DSM 273 / BCRC 81028 / 2530) (Pelodictyon luteolum), this protein is Small ribosomal subunit protein uS15.